We begin with the raw amino-acid sequence, 359 residues long: Biotin synthase (359 aa).

Residues 1-22 (MQSTPLNFVPNAAKAPVTPGQA) are disordered. Positions 58 to 285 (NAVQLSTLLS…KAMVRLSAGR (228 aa)) constitute a Radical SAM core domain. [4Fe-4S] cluster is bound by residues Cys73, Cys77, and Cys80. [2Fe-2S] cluster-binding residues include Cys117, Cys148, Cys208, and Arg280.

It belongs to the radical SAM superfamily. Biotin synthase family. In terms of assembly, homodimer. Requires [4Fe-4S] cluster as cofactor. [2Fe-2S] cluster is required as a cofactor.

The catalysed reaction is (4R,5S)-dethiobiotin + (sulfur carrier)-SH + 2 reduced [2Fe-2S]-[ferredoxin] + 2 S-adenosyl-L-methionine = (sulfur carrier)-H + biotin + 2 5'-deoxyadenosine + 2 L-methionine + 2 oxidized [2Fe-2S]-[ferredoxin]. It participates in cofactor biosynthesis; biotin biosynthesis; biotin from 7,8-diaminononanoate: step 2/2. In terms of biological role, catalyzes the conversion of dethiobiotin (DTB) to biotin by the insertion of a sulfur atom into dethiobiotin via a radical-based mechanism. The protein is Biotin synthase of Ralstonia pickettii (strain 12J).